Reading from the N-terminus, the 71-residue chain is Ceratotoxin-D (71 aa).

Positions 1–23 are cleaved as a signal peptide; the sequence is MANLKAVFLICILAFIAFHCVVG. A propeptide spanning residues 24–35 is cleaved from the precursor; the sequence is APTAEDSIVVKR.

As to quaternary structure, homomer of four to six subunits.

It is found in the secreted. In terms of biological role, female-specific peptides with potent activity against Gram-positive and Gram-negative bacteria. They have as well hemolytic activity. This Ceratitis capitata (Mediterranean fruit fly) protein is Ceratotoxin-D (CTXD).